A 77-amino-acid chain; its full sequence is U8-lycotoxin-Ls1s (77 aa).

A signal peptide spans 1 to 20 (MKLIIFTGLVLFAIVSLIEA). Positions 21–26 (QAENER) are excised as a propeptide.

It belongs to the neurotoxin 19 (CSTX) family. 08 (U8-Lctx) subfamily. Post-translationally, contains 4 disulfide bonds. In terms of tissue distribution, expressed by the venom gland.

Its subcellular location is the secreted. The sequence is that of U8-lycotoxin-Ls1s from Lycosa singoriensis (Wolf spider).